The chain runs to 188 residues: Elongation factor P (188 aa).

This sequence belongs to the elongation factor P family.

The protein localises to the cytoplasm. The protein operates within protein biosynthesis; polypeptide chain elongation. Involved in peptide bond synthesis. Stimulates efficient translation and peptide-bond synthesis on native or reconstituted 70S ribosomes in vitro. Probably functions indirectly by altering the affinity of the ribosome for aminoacyl-tRNA, thus increasing their reactivity as acceptors for peptidyl transferase. In Chlorobaculum parvum (strain DSM 263 / NCIMB 8327) (Chlorobium vibrioforme subsp. thiosulfatophilum), this protein is Elongation factor P.